Here is a 235-residue protein sequence, read N- to C-terminus: Calcium-activated potassium channel subunit beta-2 (235 aa).

A ball and chain region spans residues 1-45; the sequence is MFIWTSGRTSSSYRQDEKRNIYQKIRDHDLLDKRKTVTALKAGED. Topologically, residues 1-46 are cytoplasmic; it reads MFIWTSGRTSSSYRQDEKRNIYQKIRDHDLLDKRKTVTALKAGEDR. The helical transmembrane segment at 47-67 threads the bilayer; sequence AILLGLAMMVCSIMMYFLLGI. At 68-194 the chain is on the extracellular side; that stretch reads TLLRSYMQSV…VILTKLYSSN (127 aa). 3 N-linked (GlcNAc...) asparagine glycosylation sites follow: N88, N96, and N119. The helical transmembrane segment at 195 to 215 threads the bilayer; it reads VLFHSLFWPTCMMAGGVAIVA. The Cytoplasmic segment spans residues 216–235; the sequence is MVKLTQYLSLLCERIQRINR.

It belongs to the KCNMB (TC 8.A.14.1) family. KCNMB2 subfamily. In terms of assembly, interacts with KCNMA1 tetramer. There are probably 4 molecules of KCMNB2 per KCNMA1 tetramer. N-glycosylated.

The protein localises to the membrane. In terms of biological role, regulatory subunit of the calcium activated potassium KCNMA1 (maxiK) channel. Modulates the calcium sensitivity and gating kinetics of KCNMA1, thereby contributing to KCNMA1 channel diversity. Acts as a negative regulator that confers rapid and complete inactivation of KCNMA1 channel complex. In Mus musculus (Mouse), this protein is Calcium-activated potassium channel subunit beta-2 (Kcnmb2).